A 305-amino-acid chain; its full sequence is Tetraspanin-12 (305 aa).

The Cytoplasmic segment spans residues 1-12 (MAREDSVKCLRC). 2 S-palmitoyl cysteine lipidation sites follow: Cys9 and Cys12. A helical membrane pass occupies residues 13 to 33 (LLYALNLLFWLMSISVLAVSA). Residues 34–59 (WMRDYLNNVLTLTAETRVEEAVILTY) are Extracellular-facing. The helical transmembrane segment at 60-80 (FPVVHPVMIAVCCFLIIVGML) threads the bilayer. Residues 81-89 (GYCGTVKRN) are Cytoplasmic-facing. The S-palmitoyl cysteine moiety is linked to residue Cys83. A helical transmembrane segment spans residues 90 to 110 (LLLLAWYFGTLLVIFCVELAC). Over 111 to 224 (GVWTYEQEVM…RGTKQLQVLR (114 aa)) the chain is Extracellular. The chain crosses the membrane as a helical span at residues 225 to 245 (FLGISIGVTQILAMILTITLL). Topologically, residues 246 to 305 (WALYYDRREPGTDQMLSLKNDTSQHLSCHSVELLKPSLSRIFEHTSMANSFNTHFEMEEL) are cytoplasmic.

It belongs to the tetraspanin (TM4SF) family. In terms of assembly, interacts (when palmitoylated) with ADAM10. Interacts with MMP14/MT1-MMP. Component of a complex, at least composed of TSPAN12, FZD4 and norrin (NDP). Post-translationally, palmitoylated; required for interaction with ADAM10. In terms of tissue distribution, expressed in the neonatal retinal vasculature but not other retinal tissues. Also detected in the neonatal meningeal vasculature and in nonvascular cell types, such as the smooth muscle cells in the neonatal intestine.

The protein resides in the cell membrane. In terms of biological role, regulator of cell surface receptor signal transduction. Acts as a regulator of membrane proteinases such as ADAM10 and MMP14/MT1-MMP. Activates ADAM10-dependent cleavage activity of amyloid precursor protein (APP). Activates MMP14/MT1-MMP-dependent cleavage activity. Plays a central role in retinal vascularization by regulating norrin (NDP) signal transduction. Acts in concert with norrin (NDP) to promote FZD4 multimerization and subsequent activation of FZD4, leading to promote accumulation of beta-catenin (CTNNB1) and stimulate LEF/TCF-mediated transcriptional programs. Suprisingly, it only activate the norrin (NDP)-dependent activation of FZD4, while it does not activate the Wnt-dependent activation of FZD4, suggesting the existence of a Wnt-independent signaling that also promote accumulation the beta-catenin (CTNNB1). The sequence is that of Tetraspanin-12 (Tspan12) from Mus musculus (Mouse).